Consider the following 151-residue polypeptide: Cytochrome c-type biogenesis protein CcmE (151 aa).

The Cytoplasmic portion of the chain corresponds to 1-8; the sequence is MNPLRRKR. A helical; Signal-anchor for type II membrane protein membrane pass occupies residues 9–29; the sequence is LLIILAILVGVGIAVGLALSA. The Periplasmic portion of the chain corresponds to 30 to 151; the sequence is LQQNINLFYT…QSAPTPAKEG (122 aa). Positions 124 and 128 each coordinate heme.

This sequence belongs to the CcmE/CycJ family.

It is found in the cell inner membrane. Heme chaperone required for the biogenesis of c-type cytochromes. Transiently binds heme delivered by CcmC and transfers the heme to apo-cytochromes in a process facilitated by CcmF and CcmH. The chain is Cytochrome c-type biogenesis protein CcmE from Pseudomonas fluorescens (strain SBW25).